The chain runs to 292 residues: ATP synthase gamma chain (292 aa).

Belongs to the ATPase gamma chain family. F-type ATPases have 2 components, CF(1) - the catalytic core - and CF(0) - the membrane proton channel. CF(1) has five subunits: alpha(3), beta(3), gamma(1), delta(1), epsilon(1). CF(0) has three main subunits: a, b and c.

It is found in the cell inner membrane. Functionally, produces ATP from ADP in the presence of a proton gradient across the membrane. The gamma chain is believed to be important in regulating ATPase activity and the flow of protons through the CF(0) complex. This Chlorobaculum tepidum (strain ATCC 49652 / DSM 12025 / NBRC 103806 / TLS) (Chlorobium tepidum) protein is ATP synthase gamma chain.